Consider the following 941-residue polypeptide: Glycine dehydrogenase (decarboxylating) (941 aa).

Position 692 is an N6-(pyridoxal phosphate)lysine (Lys-692).

This sequence belongs to the GcvP family. As to quaternary structure, the glycine cleavage system is composed of four proteins: P, T, L and H. The cofactor is pyridoxal 5'-phosphate.

It catalyses the reaction N(6)-[(R)-lipoyl]-L-lysyl-[glycine-cleavage complex H protein] + glycine + H(+) = N(6)-[(R)-S(8)-aminomethyldihydrolipoyl]-L-lysyl-[glycine-cleavage complex H protein] + CO2. The glycine cleavage system catalyzes the degradation of glycine. The P protein binds the alpha-amino group of glycine through its pyridoxal phosphate cofactor; CO(2) is released and the remaining methylamine moiety is then transferred to the lipoamide cofactor of the H protein. This chain is Glycine dehydrogenase (decarboxylating), found in Mycobacterium avium (strain 104).